The following is a 134-amino-acid chain: Z-ring associated protein G (134 aa).

A helical transmembrane segment spans residues 7 to 27 (EIWVAIGIAFIVGLFIGYIIV). A disordered region spans residues 107-134 (ATDKSQNEQPRDYSEGASGLFKENKEEN). The span at 111–120 (SQNEQPRDYS) shows a compositional bias: basic and acidic residues.

The protein belongs to the ZapG family.

Its subcellular location is the cell inner membrane. In terms of biological role, involved in cell division, cell envelope biogenesis and cell shape maintenance. The chain is Z-ring associated protein G from Haemophilus influenzae (strain ATCC 51907 / DSM 11121 / KW20 / Rd).